The primary structure comprises 301 residues: Acetylglutamate kinase (301 aa).

Substrate-binding positions include 71–72 (GG), Arg-93, and Asn-198.

Belongs to the acetylglutamate kinase family. ArgB subfamily.

Its subcellular location is the cytoplasm. The enzyme catalyses N-acetyl-L-glutamate + ATP = N-acetyl-L-glutamyl 5-phosphate + ADP. The protein operates within amino-acid biosynthesis; L-arginine biosynthesis; N(2)-acetyl-L-ornithine from L-glutamate: step 2/4. Its function is as follows. Catalyzes the ATP-dependent phosphorylation of N-acetyl-L-glutamate. The sequence is that of Acetylglutamate kinase from Rhizorhabdus wittichii (strain DSM 6014 / CCUG 31198 / JCM 15750 / NBRC 105917 / EY 4224 / RW1) (Sphingomonas wittichii).